The primary structure comprises 314 residues: Methionyl-tRNA formyltransferase (314 aa).

113–116 (SILP) provides a ligand contact to (6S)-5,6,7,8-tetrahydrofolate.

Belongs to the Fmt family.

It carries out the reaction L-methionyl-tRNA(fMet) + (6R)-10-formyltetrahydrofolate = N-formyl-L-methionyl-tRNA(fMet) + (6S)-5,6,7,8-tetrahydrofolate + H(+). Attaches a formyl group to the free amino group of methionyl-tRNA(fMet). The formyl group appears to play a dual role in the initiator identity of N-formylmethionyl-tRNA by promoting its recognition by IF2 and preventing the misappropriation of this tRNA by the elongation apparatus. The sequence is that of Methionyl-tRNA formyltransferase from Photobacterium profundum (strain SS9).